Consider the following 1425-residue polypeptide: Neuropathy target esterase sws (1425 aa).

Topologically, residues 1–34 are lumenal; sequence MDVLEMLRASASGSYNTIFSDAWCQYVSKQITAT. Residues 35-55 traverse the membrane as a helical segment; the sequence is VYMYFALVMMSLLFIAWFLYF. Topologically, residues 56–1425 are cytoplasmic; the sequence is KRMARLRLRD…RSSPNNETKN (1370 aa). A nucleoside 3',5'-cyclic phosphate is bound at residue 174 to 301; it reads IFGHFEKPVF…IRVIQVIMIR (128 aa). Composition is skewed to polar residues over residues 332-348 and 357-366; these read TMSGPINSQTSQSSRQA and SQMNLMQSAV. The interval 332–410 is disordered; the sequence is TMSGPINSQT…NPDGSFHGTT (79 aa). Low complexity predominate over residues 367 to 381; the sequence is SGTGSSGVSVTVTRP. Serine 444 and serine 453 each carry phosphoserine. A nucleoside 3',5'-cyclic phosphate contacts are provided by residues 482–609 and 598–727; these read ELGL…VVRR and IVLD…HRFL. In terms of domain architecture, PNPLA spans 952 to 1118; that stretch reads LVLGGGGARG…VNNLPADVMH (167 aa). Positions 956–961 match the GXGXXG motif; sequence GGGARG. Residues 983 to 987 carry the GXSXG motif; sequence GVSIG. Residue serine 985 is the Nucleophile of the active site. The active-site Proton acceptor is aspartate 1105. A DGA/G motif is present at residues 1105–1107; that stretch reads DGG. Position 1160 is a phosphoserine (serine 1160). The segment at 1330–1425 is disordered; sequence LERKTDKSTQ…RSSPNNETKN (96 aa). A compositionally biased stretch (low complexity) spans 1337 to 1347; the sequence is STQSSPPSNSR. Residues 1348 to 1358 show a composition bias toward basic and acidic residues; it reads SDMRGKEEARH. The segment covering 1380–1403 has biased composition (low complexity); sequence TKTQTGQEQELQQEQQDQGATAEQ. Positions 1404-1416 are enriched in basic and acidic residues; sequence LVDKDKEENKENR.

Belongs to the NTE family. As to quaternary structure, interacts with Pka-C3; interaction inhibits the catalytic function of Pka-C3 and the esterase activity of sws. In terms of tissue distribution, isoform A and isoform B are expressed in the entire brain cortex; cortical cell bodies of adult brain. Sws and Pka-C3 are colocalized in all neurons.

The protein localises to the endoplasmic reticulum membrane. It catalyses the reaction a 1-acyl-sn-glycero-3-phosphocholine + H2O = sn-glycerol 3-phosphocholine + a fatty acid + H(+). Functionally, phospholipase B that deacylates intracellular phosphatidylcholine (PtdCho), generating glycerophosphocholine (GroPtdCho). This deacylation occurs at both sn-2 and sn-1 positions of PtdCho. Its specific chemical modification by certain organophosphorus (OP) compounds leads to distal axonopathy. Plays a role in the signaling mechanism between neurons and glia that regulates glia wrapping during development of the adult brain. Essential for membrane lipid homeostasis and cell survival in both neurons and glia of the adult brain. This is Neuropathy target esterase sws (sws) from Drosophila melanogaster (Fruit fly).